Consider the following 159-residue polypeptide: Small ribosomal subunit protein uS17 (159 aa).

The protein belongs to the universal ribosomal protein uS17 family.

It is found in the cytoplasm. The polypeptide is Small ribosomal subunit protein uS17 (RPS11) (Zea mays (Maize)).